Consider the following 314-residue polypeptide: 2,3-dihydroxyphenylpropionate/2,3-dihydroxicinnamic acid 1,2-dioxygenase 1 (314 aa).

Histidine 115 (proton donor) is an active-site residue. The Proton acceptor role is filled by histidine 179.

This sequence belongs to the LigB/MhpB extradiol dioxygenase family. As to quaternary structure, homotetramer. The cofactor is Fe(2+).

The enzyme catalyses 3-(2,3-dihydroxyphenyl)propanoate + O2 = (2Z,4E)-2-hydroxy-6-oxonona-2,4-dienedioate + H(+). The catalysed reaction is (2E)-3-(2,3-dihydroxyphenyl)prop-2-enoate + O2 = (2Z,4E,7E)-2-hydroxy-6-oxonona-2,4,7-trienedioate + H(+). It functions in the pathway aromatic compound metabolism; 3-phenylpropanoate degradation. In terms of biological role, catalyzes the non-heme iron(II)-dependent oxidative cleavage of 2,3-dihydroxyphenylpropionic acid and 2,3-dihydroxicinnamic acid into 2-hydroxy-6-ketononadienedioate and 2-hydroxy-6-ketononatrienedioate, respectively. This chain is 2,3-dihydroxyphenylpropionate/2,3-dihydroxicinnamic acid 1,2-dioxygenase 1, found in Pseudomonas putida (Arthrobacter siderocapsulatus).